Here is a 215-residue protein sequence, read N- to C-terminus: ATP-dependent dethiobiotin synthetase BioD (215 aa).

Residue 13-18 (DIGKTV) coordinates ATP. Mg(2+) is bound at residue T17. Residue K38 is part of the active site. Residue T42 coordinates substrate. ATP-binding positions include D50, 115–118 (EGAG), and 175–176 (NH). Mg(2+) contacts are provided by D50 and E115.

Belongs to the dethiobiotin synthetase family. In terms of assembly, homodimer. The cofactor is Mg(2+).

The protein resides in the cytoplasm. It catalyses the reaction (7R,8S)-7,8-diammoniononanoate + CO2 + ATP = (4R,5S)-dethiobiotin + ADP + phosphate + 3 H(+). Its pathway is cofactor biosynthesis; biotin biosynthesis; biotin from 7,8-diaminononanoate: step 1/2. Catalyzes a mechanistically unusual reaction, the ATP-dependent insertion of CO2 between the N7 and N8 nitrogen atoms of 7,8-diaminopelargonic acid (DAPA, also called 7,8-diammoniononanoate) to form a ureido ring. This is ATP-dependent dethiobiotin synthetase BioD from Neisseria meningitidis serogroup C / serotype 2a (strain ATCC 700532 / DSM 15464 / FAM18).